The sequence spans 321 residues: Phospho-N-acetylmuramoyl-pentapeptide-transferase (321 aa).

The next 10 membrane-spanning stretches (helical) occupy residues 4 to 24, 51 to 71, 75 to 95, 109 to 129, 139 to 159, 173 to 193, 195 to 215, 222 to 242, 247 to 267, and 297 to 317; these read MVWA…WLIP, TMGG…TVGF, SGVL…DDYI, QKFT…VYGI, GFEV…LLIV, GLAA…ASAG, SDVT…FLFF, MFMG…LALL, LILP…ILQV, and VVYT…LLAM.

Belongs to the glycosyltransferase 4 family. MraY subfamily. It depends on Mg(2+) as a cofactor.

It is found in the cell membrane. It carries out the reaction UDP-N-acetyl-alpha-D-muramoyl-L-alanyl-gamma-D-glutamyl-meso-2,6-diaminopimeloyl-D-alanyl-D-alanine + di-trans,octa-cis-undecaprenyl phosphate = di-trans,octa-cis-undecaprenyl diphospho-N-acetyl-alpha-D-muramoyl-L-alanyl-D-glutamyl-meso-2,6-diaminopimeloyl-D-alanyl-D-alanine + UMP. It participates in cell wall biogenesis; peptidoglycan biosynthesis. Functionally, catalyzes the initial step of the lipid cycle reactions in the biosynthesis of the cell wall peptidoglycan: transfers peptidoglycan precursor phospho-MurNAc-pentapeptide from UDP-MurNAc-pentapeptide onto the lipid carrier undecaprenyl phosphate, yielding undecaprenyl-pyrophosphoryl-MurNAc-pentapeptide, known as lipid I. The polypeptide is Phospho-N-acetylmuramoyl-pentapeptide-transferase (Heliobacterium modesticaldum (strain ATCC 51547 / Ice1)).